A 126-amino-acid chain; its full sequence is Profilin-1 (126 aa).

This sequence belongs to the profilin family. In terms of assembly, occurs in many kinds of cells as a complex with monomeric actin in a 1:1 ratio.

It is found in the cytoplasm. Its subcellular location is the cytoskeleton. Functionally, binds to actin and affects the structure of the cytoskeleton. At high concentrations, profilin prevents the polymerization of actin, whereas it enhances it at low concentrations. By binding to PIP2, it inhibits the formation of IP3 and DG. This is Profilin-1 (proA) from Dictyostelium discoideum (Social amoeba).